Consider the following 710-residue polypeptide: FAST kinase domain-containing protein 2, mitochondrial (710 aa).

Phosphoserine is present on residues serine 126 and serine 140. One can recognise an RAP domain in the interval 634–691 (VAVLCVSRSAYCLGSSHPRGFLAMKMRHLNAMGFHVILVNNWEMDKLEMEDAVTFLKT). Serine 708 bears the Phosphoserine mark.

This sequence belongs to the FAST kinase family. As to quaternary structure, monomer. Found in a complex with GRSF1, DDX28, DHX30 and FASTKD5. Associates with the 16S mitochondrial rRNA (16S mt-rRNA). Forms a regulatory protein-RNA complex, consisting of RCC1L, NGRN, RPUSD3, RPUSD4, TRUB2, FASTKD2 and 16S mt-rRNA. In terms of tissue distribution, expression detected in spleen, thymus, testis, ovary, colon, heart, smooth muscle, kidney, brain, lung, liver and white adipose tissue with highest expression in heart, smooth muscle and thyroid.

It localises to the mitochondrion matrix. The protein resides in the mitochondrion nucleoid. Functionally, plays an important role in assembly of the mitochondrial large ribosomal subunit. As a component of a functional protein-RNA module, consisting of RCC1L, NGRN, RPUSD3, RPUSD4, TRUB2, FASTKD2 and 16S mitochondrial ribosomal RNA (16S mt-rRNA), controls 16S mt-rRNA abundance and is required for intra-mitochondrial translation. May play a role in mitochondrial apoptosis. The chain is FAST kinase domain-containing protein 2, mitochondrial from Homo sapiens (Human).